The following is a 318-amino-acid chain: MRAKPSDAKLTGLFLDMLAAEQGAGPNTLDAYRRDLTDFSEFLGRVGHSFADAETQTLRDYLADLDTRGFKSTSVARRLSAMRHLYRFLLNERIRGDDPAAILSGPKRGRGLPKVLSIADVDRMLRRARELSEAEDASPSKRLRALRLYCLLEVLYATGLRVSELVALPRTAAKRDARMIVVRGKGNKERLVPLNEASRQAMADYLAATEAAKSDKKTGVAASKWLFPSFGESGHLTRQHFARDLKELAVASGLQARLVSPHVLRHAFASHLLHNGADLRIVQTLLGHTDISTTQIYTHVVEERLKSLVRDLHPLAEK.

One can recognise a Core-binding (CB) domain in the interval 5 to 90 (PSDAKLTGLF…AMRHLYRFLL (86 aa)). In terms of domain architecture, Tyr recombinase spans 111–310 (GLPKVLSIAD…VEERLKSLVR (200 aa)). Residues arginine 161, lysine 185, histidine 262, arginine 265, and histidine 288 contribute to the active site. The active-site O-(3'-phospho-DNA)-tyrosine intermediate is the tyrosine 297.

The protein belongs to the 'phage' integrase family. XerD subfamily. As to quaternary structure, forms a cyclic heterotetrameric complex composed of two molecules of XerC and two molecules of XerD.

The protein resides in the cytoplasm. Site-specific tyrosine recombinase, which acts by catalyzing the cutting and rejoining of the recombining DNA molecules. The XerC-XerD complex is essential to convert dimers of the bacterial chromosome into monomers to permit their segregation at cell division. It also contributes to the segregational stability of plasmids. The chain is Tyrosine recombinase XerD from Bradyrhizobium diazoefficiens (strain JCM 10833 / BCRC 13528 / IAM 13628 / NBRC 14792 / USDA 110).